Consider the following 481-residue polypeptide: RAC-beta serine/threonine-protein kinase (481 aa).

Met1 carries the post-translational modification N-acetylmethionine. Residues 5 to 108 (SVIKEGWLHK…WMRAIQMVAN (104 aa)) enclose the PH domain. At Ser34 the chain carries Phosphoserine. Cys60 and Cys77 are oxidised to a cystine. Ser126 carries the post-translational modification Phosphoserine. Residues Ser128 and Ser131 are each glycosylated (O-linked (GlcNAc) serine). A Protein kinase domain is found at 152–409 (FDYLKLLGKG…AKEVMEHRFF (258 aa)). Residues 158-166 (LGKGTFGKV) and Lys181 each bind ATP. The Proton acceptor role is filled by Asp275. Mn(2+) contacts are provided by Asn280 and Asp293. Cys297 and Cys311 are oxidised to a cystine. The O-linked (GlcNAc) threonine glycan is linked to Thr306. Thr309 is modified (phosphothreonine; by PDPK1). Residue Thr313 is glycosylated (O-linked (GlcNAc) threonine). Residues 410–481 (LSINWQDVVQ…QFSYSASIRE (72 aa)) enclose the AGC-kinase C-terminal domain. A Phosphoserine modification is found at Ser447. Residue Thr451 is modified to Phosphothreonine. Phosphoserine; by MTOR is present on residues Ser474 and Ser478. Ser474 is a glycosylation site (O-linked (GlcNAc) serine; alternate).

It belongs to the protein kinase superfamily. AGC Ser/Thr protein kinase family. RAC subfamily. Interacts with BTBD10. Interacts with KCTD20. Interacts (via PH domain) with MTCP1, TCL1A and TCL1B; this interaction may facilitate AKT2 oligomerization and phosphorylation, hence increasing kinase activity. Interacts with PHB2; this interaction may be important for myogenic differentiation. Interacts (when phosphorylated) with CLIP3/ClipR-59; this interaction promotes cell membrane localization. Interacts with WDFY2 (via WD repeats 1-3). Phosphorylation on Thr-309 and Ser-474 is required for full activity. Phosphorylation of the activation loop at Thr-309 by PDPK1/PDK1 is a prerequisite for full activation. Phosphorylated and activated by PDPK1/PDK1 in the presence of phosphatidylinositol 3,4,5-trisphosphate. Phosphorylation by mTORC2 in response to growth factors plays a key role in AKT1 activation: mTORC2 phosphorylates different sites depending on the context, such as Ser-474 or Ser-478, thereby facilitating subsequent phosphorylation of the activation loop by PDPK1/PDK1. In terms of processing, ubiquitinated; undergoes both 'Lys-48'- and 'Lys-63'-linked polyubiquitination. TRAF6-induced 'Lys-63'-linked AKT2 ubiquitination. When fully phosphorylated and translocated into the nucleus, undergoes 'Lys-48'-polyubiquitination catalyzed by TTC3, leading to its degradation by the proteasome. Post-translationally, O-GlcNAcylation at Thr-306 and Thr-313 inhibits activating phosphorylation at Thr-309 via disrupting the interaction between AKT and PDPK1/PDK1.

It localises to the cytoplasm. It is found in the nucleus. The protein resides in the cell membrane. Its subcellular location is the early endosome. The catalysed reaction is L-seryl-[protein] + ATP = O-phospho-L-seryl-[protein] + ADP + H(+). The enzyme catalyses L-threonyl-[protein] + ATP = O-phospho-L-threonyl-[protein] + ADP + H(+). With respect to regulation, two specific sites, one in the kinase domain (Thr-309) and the other in the C-terminal regulatory region (Ser-474), need to be phosphorylated for its full activation. AKT2 phosphorylation of PKP1 is induced by insulin. Inhibited by Akt inhibitor MK2206. Its function is as follows. AKT2 is one of 3 closely related serine/threonine-protein kinases (AKT1, AKT2 and AKT3) called the AKT kinases, and which regulate many processes including metabolism, proliferation, cell survival, growth and angiogenesis. This is mediated through serine and/or threonine phosphorylation of a range of downstream substrates. Over 100 substrate candidates have been reported so far, but for most of them, no isoform specificity has been reported. AKT is responsible of the regulation of glucose uptake by mediating insulin-induced translocation of the SLC2A4/GLUT4 glucose transporter to the cell surface. Phosphorylation of PTPN1 at 'Ser-50' negatively modulates its phosphatase activity preventing dephosphorylation of the insulin receptor and the attenuation of insulin signaling. Phosphorylation of TBC1D4 triggers the binding of this effector to inhibitory 14-3-3 proteins, which is required for insulin-stimulated glucose transport. AKT also regulates the storage of glucose in the form of glycogen by phosphorylating GSK3A at 'Ser-21' and GSK3B at 'Ser-9', resulting in inhibition of its kinase activity. Phosphorylation of GSK3 isoforms by AKT is also thought to be one mechanism by which cell proliferation is driven. AKT also regulates cell survival via the phosphorylation of MAP3K5 (apoptosis signal-related kinase). Phosphorylation of 'Ser-83' decreases MAP3K5 kinase activity stimulated by oxidative stress and thereby prevents apoptosis. AKT mediates insulin-stimulated protein synthesis by phosphorylating TSC2 at 'Ser-939' and 'Thr-1462', thereby activating mTORC1 signaling and leading to both phosphorylation of 4E-BP1 and in activation of RPS6KB1. AKT is involved in the phosphorylation of members of the FOXO factors (Forkhead family of transcription factors), leading to binding of 14-3-3 proteins and cytoplasmic localization. In particular, FOXO1 is phosphorylated at 'Thr-24', 'Ser-256' and 'Ser-319'. FOXO3 and FOXO4 are phosphorylated on equivalent sites. AKT has an important role in the regulation of NF-kappa-B-dependent gene transcription and positively regulates the activity of CREB1 (cyclic AMP (cAMP)-response element binding protein). The phosphorylation of CREB1 induces the binding of accessory proteins that are necessary for the transcription of pro-survival genes such as BCL2 and MCL1. AKT phosphorylates 'Ser-454' on ATP citrate lyase (ACLY), thereby potentially regulating ACLY activity and fatty acid synthesis. Activates the 3B isoform of cyclic nucleotide phosphodiesterase (PDE3B) via phosphorylation of 'Ser-273', resulting in reduced cyclic AMP levels and inhibition of lipolysis. Phosphorylates PIKFYVE on 'Ser-318', which results in increased PI(3)P-5 activity. The Rho GTPase-activating protein DLC1 is another substrate and its phosphorylation is implicated in the regulation cell proliferation and cell growth. AKT plays a role as key modulator of the AKT-mTOR signaling pathway controlling the tempo of the process of newborn neurons integration during adult neurogenesis, including correct neuron positioning, dendritic development and synapse formation. Signals downstream of phosphatidylinositol 3-kinase (PI(3)K) to mediate the effects of various growth factors such as platelet-derived growth factor (PDGF), epidermal growth factor (EGF), insulin and insulin-like growth factor I (IGF-I). AKT mediates the antiapoptotic effects of IGF-I. Essential for the SPATA13-mediated regulation of cell migration and adhesion assembly and disassembly. May be involved in the regulation of the placental development. In response to lysophosphatidic acid stimulation, inhibits the ciliogenesis cascade. In this context, phosphorylates WDR44, hence stabilizing its interaction with Rab11 and preventing the formation of the ciliogenic Rab11-FIP3-RAB3IP complex. Also phosphorylates RAB3IP/Rabin8, thus may affect RAB3IP guanine nucleotide exchange factor (GEF) activity toward Rab8, which is important for cilia growth. Phosphorylates PKP1, facilitating its interaction with YWHAG and translocation to the nucleus, ultimately resulting in a reduction in keratinocyte intercellular adhesion. Phosphorylation of PKP1 increases PKP1 protein stability, translocation to the cytoplasm away from desmosome plaques and PKP1-driven cap-dependent translation. Functionally, several AKT2-specific substrates have been identified, including ANKRD2, C2CD5, CLK2 and PITX2. May play a role in myoblast differentiation. In this context, may act through PITX2 phosphorylation. Unphosphorylated PITX2 associates with an ELAVL1/HuR-containing complex, which stabilizes cyclin mRNA and ensuring cell proliferation. Phosphorylation by AKT2 impairs this association, leading to CCND1 mRNA destabilization and progression towards differentiation. Also involved in the negative regulation of myogenesis in response to stress conditions. In this context, acts by phosphorylating ANKRD2. May also be a key regulator of glucose uptake. Regulates insulin-stimulated glucose transport by the increase of glucose transporter GLUT4 translocation from intracellular stores to the plasma membrane. In this context, acts by phosphorylating C2CD5/CDP138 on 'Ser-197' in insulin-stimulated adipocytes. Through the phosphorylation of CLK2 on 'Thr-343', involved in insulin-regulated suppression of hepatic gluconeogenesis. The protein is RAC-beta serine/threonine-protein kinase (Akt2) of Mus musculus (Mouse).